We begin with the raw amino-acid sequence, 835 residues long: MKVLALRHSVAQIYADTQVYTHDDSKDDYENAFLISNLTTHNILYLNYSVKTLQILNKSGIAAIEIQKIDELFTLIRCNFTYDYIDDVVYLHDYSYYANNEIRTDQYWVTKTNIEDYLLPGWKLTYVGYNGSDTRGHYNFSFRCQNAATDDDVIIEYIYSNELDFQNFILKKIKERMTTSLPIARLSNRVFRDKLFKTLSVNHDKVVNVGPRNESMFTFLDHPSIKQFSNGPYLVKDTIKLKQERWLGKRLSQFDIGQYKNMLNVLTTLYQYYDMYHEKPIIYMIGSAPSYWIYDVKQYSDLKFETWDPLDTPYSNLHHKELFYINDVQKLKDNSILYIDIRTDRGNMDWKEWRKVVEGQTADNLHIAYKYLSTGKAKICCVKMTAMDVELPISAKLLHHPTTEIRSEFYLMMDIWDSKNIKRFIPKGVLYSYINNTITENVFIQQPFKLKTLKNEYVIALYALSNDLNNREDVVKLINNQKRALITVRINNTFKDEPKVGFKNIYDWTFLPTDFEMNGSIITSYDGCLGIFGLSISLASKPTGNNHLFILSGTDKYFKLDQFANHMSISRRSHQIRFSESATSYSGYIFRDLSNNNFNLIGTNVENSVSGHVYNALIYYRYNYSFDLKRWIYLHSTGKASIEGGKYYEHAPIELIYACRSAREFAKLQDDLTVLRYSNEIENYINKVYSITYADDPNYFIGIKFKNIPYKYNVKVPHLTFGVLNISEQMLPDAIAILKKFKNELFGMDITTSYTYMLSDEVYVANISGVLSTYFKIYNAFYKEQITFGQSRMFIPHVTLSFSNEKTVRIDTTKLYIDSIYLRKIKGDTVFDMTE.

The segment at 171-245 (KKIKERMTTS…KDTIKLKQER (75 aa)) is N7-methyltransferase activity. Residues 246–428 (WLGKRLSQFD…KNIKRFIPKG (183 aa)) form a 2'-O-methyltransferase activity region. The tract at residues 429–555 (VLYSYINNTI…NHLFILSGTD (127 aa)) is N7-methyltransferase activity. Residues 556–692 (KYFKLDQFAN…NYINKVYSIT (137 aa)) form a GTase/RTPase activity region. A 2'-5'-phosphodiesterase activity region spans residues 693–835 (YADDPNYFIG…KGDTVFDMTE (143 aa)). Residues His-718, Thr-720, His-797, and Thr-799 each act as for 2'-5'-phosphodiesterase activity in the active site.

It belongs to the rotavirus VP3 family. In terms of assembly, interacts with VP1. Interacts with VP2.

The protein resides in the virion. It carries out the reaction a 5'-end diphospho-ribonucleoside in mRNA + GTP + H(+) = a 5'-end (5'-triphosphoguanosine)-ribonucleoside in mRNA + diphosphate. It catalyses the reaction a 5'-end (5'-triphosphoguanosine)-ribonucleoside in mRNA + S-adenosyl-L-methionine = a 5'-end (N(7)-methyl 5'-triphosphoguanosine)-ribonucleoside in mRNA + S-adenosyl-L-homocysteine. The catalysed reaction is 5'-triphosphoadenylyl-(2'-&gt;5')-adenylyl-(2'-&gt;5')-adenosine + 2 H2O = 2 AMP + ATP + 2 H(+). In terms of biological role, multifunctional enzyme involved in mRNA capping. Catalyzes the formation of the 5' cap structure on the viral plus-strand transcripts. Specifically binds to GTP and displays guanylyltransferase and methyltransferase activities. Has affinity for ssRNA but not for dsRNA. Capping activity is non-specific and caps RNAs that initiate with either a G or an A residue. Together with VP1 polymerase, forms a VP1-VP3 complex positioned near the channels situated at each of the five-fold vertices of the core. Following infection, the outermost layer of the virus is lost, leaving a double-layered particle (DLP) made up of the core and VP6 shell. VP1 then catalyzes the transcription of fully conservative plus-strand genomic RNAs that are capped by VP3 and extruded through the DLP's channels into the cytoplasm where they function as mRNAs for translation of viral proteins. DLPs probably have an RNA triphosphatase activity as well, whereas open cores do not. Its function is as follows. Counteracts the host innate immune response thanks to its phosphodiesterase that degrades the 5'-triphosphorylated, 2'-5' linked adenylate oligomers produced by the host cell IFN-inducible 2',5'-oligoadenylate synthetase (OAS). The host RNaseL is therefore not activated. The protein is Protein VP3 of Rotavirus A (strain RVA/Human/United States/DS-1/1976/G2P1B[4]) (RV-A).